We begin with the raw amino-acid sequence, 626 residues long: ABC transporter G family member 8 (626 aa).

The 245-residue stretch at 56 to 300 folds into the ABC transporter domain; sequence VNLDNKTENS…SLGYPCPNNT (245 aa). Position 90–97 (90–97) interacts with ATP; that stretch reads GPSGSGKS. Residues 373-621 enclose the ABC transmembrane type-2 domain; sequence GNALSRVITA…SLSYFALHFL (249 aa). Transmembrane regions (helical) follow at residues 376 to 396, 409 to 429, 447 to 467, 485 to 505, 515 to 535, 543 to 563, and 600 to 620; these read LSRVITAIVIGALFGSCFAGL, TLFFLTTGLMLSPFSMITLFL, FPYFLSMITVELTIEFFVTLV, FFFAVLVYSFIHSLSTFFISS, LTFSYASSLSVVFMLFAGFYV, AFGWLHWVNPAFYGYSSVVIN, and FGVLVAWATFFYSLSYFALHF.

It belongs to the ABC transporter superfamily. ABCG family. Eye pigment precursor importer (TC 3.A.1.204) subfamily.

It localises to the membrane. The protein is ABC transporter G family member 8 (abcG8) of Dictyostelium discoideum (Social amoeba).